The chain runs to 134 residues: Large ribosomal subunit protein uL22 (134 aa).

Belongs to the universal ribosomal protein uL22 family. As to quaternary structure, part of the 50S ribosomal subunit.

Its function is as follows. This protein binds specifically to 23S rRNA; its binding is stimulated by other ribosomal proteins, e.g. L4, L17, and L20. It is important during the early stages of 50S assembly. It makes multiple contacts with different domains of the 23S rRNA in the assembled 50S subunit and ribosome. Functionally, the globular domain of the protein is located near the polypeptide exit tunnel on the outside of the subunit, while an extended beta-hairpin is found that lines the wall of the exit tunnel in the center of the 70S ribosome. In Gluconacetobacter diazotrophicus (strain ATCC 49037 / DSM 5601 / CCUG 37298 / CIP 103539 / LMG 7603 / PAl5), this protein is Large ribosomal subunit protein uL22.